Here is a 343-residue protein sequence, read N- to C-terminus: Glucan endo-1,3-beta-glucosidase, acidic isoform GI9 (343 aa).

The signal sequence occupies residues 1-29 (MTLCIKNGFLAAALVLVGLLICSIQMIGA). Q30 carries the pyrrolidone carboxylic acid modification. The active-site Proton donor is E124. The Nucleophile role is filled by E264.

The protein belongs to the glycosyl hydrolase 17 family.

It is found in the secreted. The protein resides in the extracellular space. It carries out the reaction Hydrolysis of (1-&gt;3)-beta-D-glucosidic linkages in (1-&gt;3)-beta-D-glucans.. Functionally, implicated in the defense of plants against pathogens. The sequence is that of Glucan endo-1,3-beta-glucosidase, acidic isoform GI9 (PR2) from Nicotiana tabacum (Common tobacco).